The chain runs to 595 residues: DNA primase (595 aa).

The segment at 38 to 62 adopts a CHC2-type zinc-finger fold; it reads CPFHDEKTPSFIVYPTRGHYHCYGC. The 81-residue stretch at 251–331 folds into the Toprim domain; sequence RRVILVEGQA…GITAIVCRLP (81 aa). Glu-257, Asp-302, and Asp-304 together coordinate Mg(2+). Over residues 430-441 the composition is skewed to basic and acidic residues; sequence KGKKVSAKEPSS. Positions 430-451 are disordered; that stretch reads KGKKVSAKEPSSESKQTSTEGK.

It belongs to the DnaG primase family. As to quaternary structure, monomer. Interacts with DnaB. Requires Zn(2+) as cofactor. Mg(2+) is required as a cofactor.

The enzyme catalyses ssDNA + n NTP = ssDNA/pppN(pN)n-1 hybrid + (n-1) diphosphate.. In terms of biological role, RNA polymerase that catalyzes the synthesis of short RNA molecules used as primers for DNA polymerase during DNA replication. The protein is DNA primase of Chlamydia trachomatis serovar D (strain ATCC VR-885 / DSM 19411 / UW-3/Cx).